Here is a 72-residue protein sequence, read N- to C-terminus: U-actitoxin-Aeq5b (72 aa).

The first 20 residues, 1-20 (MNQVMTIFLVLGVIVYSVES), serve as a signal peptide directing secretion. 4 cysteine pairs are disulfide-bonded: Cys33–Cys71, Cys37–Cys66, Cys44–Cys59, and Cys50–Cys56.

This sequence belongs to the Acrorhagin I family. Expressed by acrorhagi.

The protein localises to the secreted. It is found in the nematocyst. Functionally, toxin that is lethal to crab. It interacts with divalent metal ions (zinc and nickel) suggesting it may function as a metal ion chelator to regulate metal ion levels or as a metal ion transporter, or that its function is modulated by metal ions. Is not active against any of the voltage-gated potassium and sodium channels tested. In addition, it does not show activity in bacterial and fungal growth inhibitory assays as well as in hemolytic assays. The protein is U-actitoxin-Aeq5b of Actinia equina (Beadlet anemone).